Reading from the N-terminus, the 435-residue chain is MDFLISTSLSESTSTSADFCVVCGDKAIGKHYGAVACNGCKGFFRRSVWQNLQYTCRFNKQCNIDKDHRNACRYCRFQKCLADGMKPEAIQNERDRIGSTKRRKRSGANSENNSDSEGTPSPKIEVMGNSVSRKLIEMLLDIEHRLASNQSMNALLRDESEMKNSRQRAVNYLIGWTNMLHPLPEVPLADKVLLLKKFSSAFTLLGTLQRSMALPHFVLPNDQVLSISASHPPELFEALTRIIDELLTPLRRLRTDHAEFSCLKALLLLNPDVVGISNNTRERIREARDALLKTLFAYMSNTQNSIDASLRVSSLLMIIPSLISVSSSIMEFPALSDLFGLGDVIKRDTISPKIETPPLEMKPMMPKIAQPPVTSAPTVPTNIMMNKDLISQIMNNPQLFPLLPMPQTASPPMSFMGQSEFGCHLQSMPVKVILS.

Residues 17–92 (ADFCVVCGDK…DGMKPEAIQN (76 aa)) constitute a DNA-binding region (nuclear receptor). 2 NR C4-type zinc fingers span residues 20–40 (CVVCGDKAIGKHYGAVACNGC) and 56–80 (CRFNKQCNIDKDHRNACRYCRFQKC). The disordered stretch occupies residues 91-126 (QNERDRIGSTKRRKRSGANSENNSDSEGTPSPKIEV). Residues 107–119 (GANSENNSDSEGT) are compositionally biased toward polar residues. The NR LBD domain occupies 131–355 (VSRKLIEMLL…KRDTISPKIE (225 aa)).

The protein belongs to the nuclear hormone receptor family. Expressed in intestine and head neurons in young adults.

The protein resides in the nucleus. Orphan nuclear receptor. Transcriptional repressor of intestinal metal transporter smf-3 and genes of the innate immune response. Inhibits nuclear localization of transcription factor pqm-1; in response to pathogen stress, may facilitate translocation of pqm-1, leading to transcriptional activation of genes involved in innate immunity and iron uptake. The polypeptide is Nuclear hormone receptor family member nhr-14 (nhr-14) (Caenorhabditis elegans).